Here is a 619-residue protein sequence, read N- to C-terminus: Lysophospholipid acyltransferase (619 aa).

The Lumenal portion of the chain corresponds to 1–19 (MYNPVDAVLTKIITNYGID). Residues 20 to 39 (SFTLRYAICLLGSFPLNAIL) traverse the membrane as a helical segment. The Cytoplasmic segment spans residues 40–51 (KRIPEKRIGLKC). A helical transmembrane segment spans residues 52-72 (CFIISMSMFYLFGVLNLVSGF). The Lumenal portion of the chain corresponds to 73–92 (RTLFISTMFTYLISRFYRSK). Residues 93-113 (FMPHLNFMFVMGHLAINHIHA) traverse the membrane as a helical segment. Residues 114-231 (QFLNEQTQTT…GERRQIPKNG (118 aa)) lie on the Cytoplasmic side of the membrane. D146 serves as the catalytic Nucleophile. A helical membrane pass occupies residues 232 to 252 (KLALWKVVQGLAWMILSTLGM). The Lumenal portion of the chain corresponds to 253 to 274 (KHFPVKYVLDKDGFPTRSFIFR). Residues 275-295 (IHYLFLLGFIHRFKYYAAWTI) form a helical membrane-spanning segment. The Cytoplasmic segment spans residues 296-429 (SEGSCILCGL…TPLPSKKIYD (134 aa)). Residue E297 is the Nucleophile of the active site. H382 is an active-site residue. A helical transmembrane segment spans residues 430 to 450 (LVGIYAIKLAFGYMVQPFIIL). Residues 451 to 456 (DLKPSL) are Lumenal-facing. A helical membrane pass occupies residues 457–477 (MVWGSVYFYVHIIVAFSFFLF). The Cytoplasmic portion of the chain corresponds to 478–619 (RGPYAKQVTE…SPKPISKKEE (142 aa)). S513 is subject to Phosphoserine. The stretch at 545 to 593 (ELEKWDNAKEDWEDFCKDYKEWRNKNGLEIEEENLSKAFERFKQEFSNA) forms a coiled coil. The segment at 592-619 (NAASGSGERVRKMSFSGYSPKPISKKEE) is disordered. A phosphoserine mark is found at S605, S610, and S615.

The protein belongs to the membrane-bound acyltransferase family.

Its subcellular location is the endoplasmic reticulum membrane. It catalyses the reaction a 1-acyl-sn-glycero-3-phosphate + an acyl-CoA = a 1,2-diacyl-sn-glycero-3-phosphate + CoA. The enzyme catalyses a 1-acyl-sn-glycero-3-phosphocholine + an acyl-CoA = a 1,2-diacyl-sn-glycero-3-phosphocholine + CoA. It carries out the reaction 1-acyl-sn-glycero-3-phospho-(1'-sn-glycerol) + an acyl-CoA = a 1,2-diacyl-sn-glycero-3-phospho-(1'-sn-glycerol) + CoA. The catalysed reaction is a 1-acyl-sn-glycero-3-phospho-(1D-myo-inositol) + an acyl-CoA = a 1,2-diacyl-sn-glycero-3-phospho-(1D-myo-inositol) + CoA. It catalyses the reaction a 1-acyl-sn-glycero-3-phospho-L-serine + an acyl-CoA = a 1,2-diacyl-sn-glycero-3-phospho-L-serine + CoA. The enzyme catalyses a 1-acyl-sn-glycero-3-phosphoethanolamine + an acyl-CoA = a 1,2-diacyl-sn-glycero-3-phosphoethanolamine + CoA. It carries out the reaction 1-(9Z-octadecenoyl)-sn-glycero-3-phosphoethanolamine + (9Z)-octadecenoyl-CoA = 1,2-di-(9Z-octadecenoyl)-sn-glycero-3-phosphoethanolamine + CoA. The catalysed reaction is 1-(9Z-octadecenoyl)-sn-glycero-3-phosphoethanolamine + (9Z)-hexadecenoyl-CoA = 1-(9Z)-octadecenoyl-2-(9Z)-hexadecenoyl-sn-glycero-3-phosphoethanolamine + CoA. It catalyses the reaction 1-(9Z-octadecenoyl)-sn-glycero-3-phosphoethanolamine + hexadecanoyl-CoA = 1-(9Z-octadecenoyl)-2-hexadecanoyl-sn-glycero-3-phosphoethanolamine + CoA. The enzyme catalyses 1-(9Z-octadecenoyl)-sn-glycero-3-phosphoethanolamine + tetradecanoyl-CoA = 1-(9Z)-octadecenoyl-2-tetradecanoyl-sn-glycero-3-phosphoethanolamine + CoA. It carries out the reaction 1-(9Z-octadecenoyl)-sn-glycero-3-phosphate + (9Z)-octadecenoyl-CoA = 1,2-di-(9Z-octadecenoyl)-sn-glycero-3-phosphate + CoA. The catalysed reaction is (9Z)-hexadecenoyl-CoA + 1-hexadecanoyl-sn-glycero-3-phosphocholine = 1-hexadecanoyl-2-(9Z-hexadecenoyl)-sn-glycero-3-phosphocholine + CoA. It catalyses the reaction 1-hexadecanoyl-sn-glycero-3-phosphocholine + (9Z)-octadecenoyl-CoA = 1-hexadecanoyl-2-(9Z-octadecenoyl)-sn-glycero-3-phosphocholine + CoA. The enzyme catalyses 1-tetradecanoyl-sn-glycero-3-phosphoethanolamine + (9Z)-octadecenoyl-CoA = 1-tetradecanoyl-2-(9Z-octadecenoyl)-sn-glycero-3-phosphoethanolamine + CoA. It carries out the reaction 1-(9Z-octadecenoyl)-sn-glycero-3-phospho-L-serine + (9Z)-octadecenoyl-CoA = 1,2-di-(9Z)-octadecenoyl-sn-glycero-3-phospho-L-serine + CoA. The catalysed reaction is a 1-acyl-sn-glycero-3-phospho-(1D-myo-inositol) + (9Z)-octadecenoyl-CoA = a 1-acyl-2-(9Z-octadecenoyl)-sn-glycero-3-phospho-(1D-myo-inositol) + CoA. Its pathway is lipid metabolism; phospholipid metabolism. Broad specificity membrane-bound O-acyltransferase that mediates the incorporation of unsaturated acyl chains into the sn-2 position of various lysophospholipids. Preferentially acylates lysophosphocholine (LPC), but also lysophosphoethanolamine (LPE), lysophosphatidylglycerol (LPG), lysophosphatidic acid (LPA), lysophosphoethanolamine (LPE), lysophosphoinositol (LPI), and lysophosphoserine (LPS). Prefers an acyl residue to an alkyl residue at the sn-1 position of lysophospholipid acceptors. Accepts acyl chains in acyl-CoA from C-2 to C-20, and shows strong preference for unsaturated acyl-CoAs with 16-20 carbons. Together with SLC1, plays a central role in phosphatidic acid (PA) biosynthesis. PA is the intermediate, from which all glycerophospholipids are synthesized. Can also introduce an acyl chain at the sn-1 position of the lysophosphatidylcholine analog 1-hydroxy-2-hexadecyl-sn-glycero-3-phosphocholine (HHPC). In Saccharomyces cerevisiae (strain ATCC 204508 / S288c) (Baker's yeast), this protein is Lysophospholipid acyltransferase.